The primary structure comprises 496 residues: Angiopoietin-2 (496 aa).

The signal sequence occupies residues 1-18 (MWQLVFFALSCDLVLAAA). Residues asparagine 89, asparagine 119, asparagine 133, asparagine 151, asparagine 240, and asparagine 304 are each glycosylated (N-linked (GlcNAc...) asparagine). The stretch at 130-255 (NLLNQTAEQT…KQQHDLMETV (126 aa)) forms a coiled coil. Positions 275-495 (KEEQIIFRDC…ATTMMIRPAD (221 aa)) constitute a Fibrinogen C-terminal domain. Cysteine 284 and cysteine 313 are oxidised to a cystine. Ca(2+)-binding residues include aspartate 429, aspartate 431, cysteine 433, and cysteine 435. 2 disulfides stabilise this stretch: cysteine 433-cysteine 435 and cysteine 437-cysteine 450.

In terms of assembly, interacts with TEK/TIE2, competing for the same binding site as ANGPT1. Interacts with ITGA5. Interacts with SVEP1/polydom. Interacts with THBD; this interaction significantly inhibits the generation of activated PC and TAFIa/CPB2 by the thrombin/thrombomodulin complex.

The protein resides in the secreted. Its function is as follows. Binds to TEK/TIE2, competing for the ANGPT1 binding site, and modulating ANGPT1 signaling. Can induce tyrosine phosphorylation of TEK/TIE2 in the absence of ANGPT1. In the absence of angiogenic inducers, such as VEGF, ANGPT2-mediated loosening of cell-matrix contacts may induce endothelial cell apoptosis with consequent vascular regression. In concert with VEGF, it may facilitate endothelial cell migration and proliferation, thus serving as a permissive angiogenic signal. Involved in the regulation of lymphangiogenesis. The sequence is that of Angiopoietin-2 (ANGPT2) from Sus scrofa (Pig).